The following is a 95-amino-acid chain: Protein TusB (95 aa).

The protein belongs to the DsrH/TusB family. In terms of assembly, heterohexamer, formed by a dimer of trimers. The hexameric TusBCD complex contains 2 copies each of TusB, TusC and TusD. The TusBCD complex interacts with TusE.

Its subcellular location is the cytoplasm. In terms of biological role, part of a sulfur-relay system required for 2-thiolation of 5-methylaminomethyl-2-thiouridine (mnm(5)s(2)U) at tRNA wobble positions. In Yersinia pseudotuberculosis serotype O:1b (strain IP 31758), this protein is Protein TusB.